Consider the following 578-residue polypeptide: A-type ATP synthase subunit A (578 aa).

Position 228–235 (glycine 228–threonine 235) interacts with ATP.

It belongs to the ATPase alpha/beta chains family. Has multiple subunits with at least A(3), B(3), C, D, E, F, H, I and proteolipid K(x).

The protein localises to the cell membrane. It carries out the reaction ATP + H2O + 4 H(+)(in) = ADP + phosphate + 5 H(+)(out). In terms of biological role, component of the A-type ATP synthase that produces ATP from ADP in the presence of a proton gradient across the membrane. The A chain is the catalytic subunit. The polypeptide is A-type ATP synthase subunit A (Methanosarcina barkeri (strain Fusaro / DSM 804)).